A 152-amino-acid polypeptide reads, in one-letter code: D-aminoacyl-tRNA deacylase (152 aa).

The Gly-cisPro motif, important for rejection of L-amino acids motif lies at 142 to 143; the sequence is GP.

The protein belongs to the DTD family. In terms of assembly, homodimer.

It is found in the cytoplasm. It carries out the reaction glycyl-tRNA(Ala) + H2O = tRNA(Ala) + glycine + H(+). It catalyses the reaction a D-aminoacyl-tRNA + H2O = a tRNA + a D-alpha-amino acid + H(+). Its function is as follows. An aminoacyl-tRNA editing enzyme that deacylates mischarged D-aminoacyl-tRNAs. Also deacylates mischarged glycyl-tRNA(Ala), protecting cells against glycine mischarging by AlaRS. Acts via tRNA-based rather than protein-based catalysis; rejects L-amino acids rather than detecting D-amino acids in the active site. By recycling D-aminoacyl-tRNA to D-amino acids and free tRNA molecules, this enzyme counteracts the toxicity associated with the formation of D-aminoacyl-tRNA entities in vivo and helps enforce protein L-homochirality. In Paraburkholderia phytofirmans (strain DSM 17436 / LMG 22146 / PsJN) (Burkholderia phytofirmans), this protein is D-aminoacyl-tRNA deacylase.